The primary structure comprises 746 residues: NAD(P)H-quinone oxidoreductase subunit 5, chloroplastic (746 aa).

The next 16 helical transmembrane spans lie at 9–29, 40–60, 89–109, 125–145, 147–167, 185–205, 219–239, 258–278, 280–300, 327–347, 354–374, 396–416, 425–445, 546–566, 607–627, and 723–743; these read WMIPFIPLPVPILLGMGLLLF, WAFLSIFLLSIVMIFSIDLSI, IDPLTSIMSILITTVGILVLI, FAYMSFFNTSMLGLVTSSNLI, VYIFWELVGMCSYLLIGFWFT, GDFGLLLGILGLYWITGSFEF, NQVHFLFVTLCAFLLFAGPVA, TPISALIHAATMVAAGIFLVA, LLPLFIGIPYIMYLISLIGII, LGYMMLALGMGSYRAALFHLI, ALLFLGSGSIIHSMEAVVGYS, TTFLLGTLSLCGIPPLACFWS, WLYSPIFAVIACSTAGLTAFY, ILFPMLILVLFTLFVGAIGIP, FSVSIAFFGIFIAFFLYKPAY, and LLLYLFYVLIFLFIYYFLNLL.

This sequence belongs to the complex I subunit 5 family. NDH is composed of at least 16 different subunits, 5 of which are encoded in the nucleus.

Its subcellular location is the plastid. It is found in the chloroplast thylakoid membrane. It carries out the reaction a plastoquinone + NADH + (n+1) H(+)(in) = a plastoquinol + NAD(+) + n H(+)(out). The enzyme catalyses a plastoquinone + NADPH + (n+1) H(+)(in) = a plastoquinol + NADP(+) + n H(+)(out). NDH shuttles electrons from NAD(P)H:plastoquinone, via FMN and iron-sulfur (Fe-S) centers, to quinones in the photosynthetic chain and possibly in a chloroplast respiratory chain. The immediate electron acceptor for the enzyme in this species is believed to be plastoquinone. Couples the redox reaction to proton translocation, and thus conserves the redox energy in a proton gradient. The chain is NAD(P)H-quinone oxidoreductase subunit 5, chloroplastic (ndhF) from Carica papaya (Papaya).